Consider the following 576-residue polypeptide: FtsZ-localized protein C (576 aa).

In terms of assembly, interacts with FtsZ filaments.

Its subcellular location is the cytoplasm. It is found in the cell inner membrane. In terms of biological role, membrane anchor for FtsZ. Binds and recruits FtsZ polymers to membranes early in the cell cycle. May also improve the efficiency of cytokinesis through the regulation of cell wall hydrolysis. This is FtsZ-localized protein C from Caulobacter vibrioides (strain NA1000 / CB15N) (Caulobacter crescentus).